A 215-amino-acid polypeptide reads, in one-letter code: Uridine kinase (215 aa).

16–23 (GASASGKS) provides a ligand contact to ATP.

The protein belongs to the uridine kinase family.

The protein resides in the cytoplasm. It carries out the reaction uridine + ATP = UMP + ADP + H(+). The enzyme catalyses cytidine + ATP = CMP + ADP + H(+). The protein operates within pyrimidine metabolism; CTP biosynthesis via salvage pathway; CTP from cytidine: step 1/3. Its pathway is pyrimidine metabolism; UMP biosynthesis via salvage pathway; UMP from uridine: step 1/1. This is Uridine kinase from Aliivibrio fischeri (strain ATCC 700601 / ES114) (Vibrio fischeri).